Consider the following 264-residue polypeptide: MTKFRGCIDIHSGQVKQIVGGTLTDSDADLKTNFVATQPPGYFAQLYKDNNVVGTHVIKLGPGCDEAAEEALAGWPDHLQIGGGINHDNAEKWIKLGASHVIVTSFLFPDAKLDMKRLTDLEAILEPYGGKKRIVVDLSCRRKDGKWVVAMNRWQTLTDTEVNKETLEQLAKHCDEFLIHAADVEGLCNGIDEELVTKLGEWLEEGHLPPVTYAGGAKNIDDLALVQKLSHGKVDLTYGSALDVFGGDKVKFSDCVEWNEKMHK.

It belongs to the HisA/HisF family.

Its subcellular location is the cytoplasm. It catalyses the reaction 1-(5-phospho-beta-D-ribosyl)-5-[(5-phospho-beta-D-ribosylamino)methylideneamino]imidazole-4-carboxamide = 5-[(5-phospho-1-deoxy-D-ribulos-1-ylimino)methylamino]-1-(5-phospho-beta-D-ribosyl)imidazole-4-carboxamide. Its pathway is amino-acid biosynthesis; L-histidine biosynthesis; L-histidine from 5-phospho-alpha-D-ribose 1-diphosphate: step 4/9. The chain is 1-(5-phosphoribosyl)-5-[(5-phosphoribosylamino)methylideneamino] imidazole-4-carboxamide isomerase (HIS6) from Yarrowia lipolytica (strain CLIB 122 / E 150) (Yeast).